The chain runs to 115 residues: Large ribosomal subunit protein bL19 (115 aa).

This sequence belongs to the bacterial ribosomal protein bL19 family.

Its function is as follows. This protein is located at the 30S-50S ribosomal subunit interface and may play a role in the structure and function of the aminoacyl-tRNA binding site. The polypeptide is Large ribosomal subunit protein bL19 (Shouchella clausii (strain KSM-K16) (Alkalihalobacillus clausii)).